The chain runs to 223 residues: Cytotoxic T-lymphocyte protein 4 (223 aa).

Positions 1–35 (MACLGFQRHKAQLNLATRTWPCTLLFFLLFIPVFC) are cleaved as a signal peptide. At 36–161 (KAMHVAQPAV…IDPEPCPDSD (126 aa)) the chain is on the extracellular side. Residues 39–140 (HVAQPAVVLA…VELMYPPPYY (102 aa)) form the Ig-like V-type domain. Positions 46 to 50 (VLASS) are homodimerization. 2 disulfides stabilise this stretch: C58–C129 and C85–C103. A glycan (N-linked (GlcNAc...) asparagine) is linked at N113. Residues 134-139 (MYPPPY) form an important for interaction with CD80 and CD86 region. N145 carries an N-linked (GlcNAc...) asparagine glycan. The homodimerization stretch occupies residues 150–155 (YVIDPE). The chain crosses the membrane as a helical span at residues 162-182 (FLLWILAAVSSGLFFYSFLLT). Residues 183–223 (AVSLSKMLKKRSPLTTGVYVKMPPTEPECEKQFQPYFIPIN) lie on the Cytoplasmic side of the membrane. Y201 carries the post-translational modification Phosphotyrosine; by TXK and JAK2.

Homodimer; disulfide-linked. Binds to CD80/B7-1 and CD86/B7.2. Interacts with ICOSLG. In terms of processing, N-glycosylation is important for dimerization. Post-translationally, phosphorylation at Tyr-201 prevents binding to the AP-2 adapter complex, blocks endocytosis, and leads to retention of CTLA4 on the cell surface. In terms of tissue distribution, widely expressed with highest levels in lymphoid tissues. Detected in activated T-cells where expression levels are 30- to 50-fold less than CD28, the stimulatory coreceptor, on the cell surface following activation.

It is found in the cell membrane. Its function is as follows. Inhibitory receptor acting as a major negative regulator of T-cell responses. The affinity of CTLA4 for its natural B7 family ligands, CD80 and CD86, is considerably stronger than the affinity of their cognate stimulatory coreceptor CD28. In Homo sapiens (Human), this protein is Cytotoxic T-lymphocyte protein 4 (CTLA4).